The sequence spans 338 residues: Glyceraldehyde-3-phosphate dehydrogenase (338 aa).

Residues 13-14 (RI), aspartate 35, and arginine 80 each bind NAD(+). Residues 151–153 (SCT), threonine 182, 211–212 (TG), and arginine 234 contribute to the D-glyceraldehyde 3-phosphate site. Cysteine 152 serves as the catalytic Nucleophile. Asparagine 316 serves as a coordination point for NAD(+).

This sequence belongs to the glyceraldehyde-3-phosphate dehydrogenase family. Homotetramer.

It is found in the cytoplasm. It carries out the reaction D-glyceraldehyde 3-phosphate + phosphate + NAD(+) = (2R)-3-phospho-glyceroyl phosphate + NADH + H(+). Its pathway is carbohydrate degradation; glycolysis; pyruvate from D-glyceraldehyde 3-phosphate: step 1/5. This Sclerotinia sclerotiorum (White mold) protein is Glyceraldehyde-3-phosphate dehydrogenase (GPD).